We begin with the raw amino-acid sequence, 164 residues long: Phosphopantetheine adenylyltransferase (164 aa).

Ser9 lines the substrate pocket. ATP-binding positions include 9–10 (SF) and His17. Substrate-binding residues include Lys41, Leu73, and Arg87. ATP contacts are provided by residues Glu98 and 122–128 (YSFLSSS).

The protein belongs to the bacterial CoaD family. Homohexamer. Mg(2+) is required as a cofactor.

It is found in the cytoplasm. The catalysed reaction is (R)-4'-phosphopantetheine + ATP + H(+) = 3'-dephospho-CoA + diphosphate. It participates in cofactor biosynthesis; coenzyme A biosynthesis; CoA from (R)-pantothenate: step 4/5. Functionally, reversibly transfers an adenylyl group from ATP to 4'-phosphopantetheine, yielding dephospho-CoA (dPCoA) and pyrophosphate. This chain is Phosphopantetheine adenylyltransferase, found in Thermobifida fusca (strain YX).